Reading from the N-terminus, the 492-residue chain is ATP synthase subunit beta, chloroplastic (492 aa).

An ATP-binding site is contributed by 170–177 (GGAGVGKT).

The protein belongs to the ATPase alpha/beta chains family. F-type ATPases have 2 components, CF(1) - the catalytic core - and CF(0) - the membrane proton channel. CF(1) has five subunits: alpha(3), beta(3), gamma(1), delta(1), epsilon(1). CF(0) has four main subunits: a(1), b(1), b'(1) and c(9-12).

Its subcellular location is the plastid. It is found in the chloroplast thylakoid membrane. The catalysed reaction is ATP + H2O + 4 H(+)(in) = ADP + phosphate + 5 H(+)(out). Its function is as follows. Produces ATP from ADP in the presence of a proton gradient across the membrane. The catalytic sites are hosted primarily by the beta subunits. The polypeptide is ATP synthase subunit beta, chloroplastic (Angiopteris lygodiifolia (Turnip fern)).